Here is a 367-residue protein sequence, read N- to C-terminus: 4-hydroxy-3-methylbut-2-en-1-yl diphosphate synthase (flavodoxin) (367 aa).

[4Fe-4S] cluster-binding residues include Cys270, Cys273, Cys305, and Glu312.

The protein belongs to the IspG family. Requires [4Fe-4S] cluster as cofactor.

The catalysed reaction is (2E)-4-hydroxy-3-methylbut-2-enyl diphosphate + oxidized [flavodoxin] + H2O + 2 H(+) = 2-C-methyl-D-erythritol 2,4-cyclic diphosphate + reduced [flavodoxin]. It participates in isoprenoid biosynthesis; isopentenyl diphosphate biosynthesis via DXP pathway; isopentenyl diphosphate from 1-deoxy-D-xylulose 5-phosphate: step 5/6. In terms of biological role, converts 2C-methyl-D-erythritol 2,4-cyclodiphosphate (ME-2,4cPP) into 1-hydroxy-2-methyl-2-(E)-butenyl 4-diphosphate. This chain is 4-hydroxy-3-methylbut-2-en-1-yl diphosphate synthase (flavodoxin), found in Buchnera aphidicola subsp. Schizaphis graminum (strain Sg).